The primary structure comprises 111 residues: MADWTRAQSSGAVEEIVDRENKRMADSLASKVTRLKSLALDIDRDTEDQNRYLDGMDSDFTSVTGLLTGSVKRFSTVARSGRDTRKLLCGMAVVLIVAFFILSYLFSRTRT.

The Cytoplasmic segment spans residues 1-86; it reads MADWTRAQSS…VARSGRDTRK (86 aa). Phosphoserine occurs at positions 9 and 37. The region spanning 15–77 is the t-SNARE coiled-coil homology domain; that stretch reads EIVDRENKRM…TGSVKRFSTV (63 aa). Residues 87-107 traverse the membrane as a helical; Anchor for type IV membrane protein segment; it reads LLCGMAVVLIVAFFILSYLFS. Topologically, residues 108–111 are vesicular; it reads RTRT.

In terms of assembly, component of a SNARE complex consisting of STX5, YKT6, GOSR1 and BET1L. Interacts with STX5. In terms of tissue distribution, widely expressed. Highest levels in heart, liver, skeletal muscle and kidney.

The protein localises to the golgi apparatus membrane. The protein resides in the golgi apparatus. It is found in the trans-Golgi network membrane. Its function is as follows. Vesicle SNARE required for targeting and fusion of retrograde transport vesicles with the Golgi complex. Required for the integrity of the Golgi complex. The chain is BET1-like protein from Rattus norvegicus (Rat).